Reading from the N-terminus, the 465-residue chain is Auxin transporter-like protein 3 (465 aa).

At 1–52 (MTSEKVETVVAGNYLEMEREEEGSKSTTGKLSKFFWHGGSVYDAWFSCASNQ) the chain is on the cytoplasmic side. Residues 53–70 (VAQVLLTLPYSFSQLGML) traverse the membrane as a helical segment. At 71–72 (SG) the chain is on the extracellular side. The helical transmembrane segment at 73 to 93 (ILFQIFYGLMGSWTAYIISVL) threads the bilayer. Residues 94-129 (YVEYRTRKEREKVDFRNHVIQWFEVLDGLLGKHWRN) lie on the Cytoplasmic side of the membrane. A helical membrane pass occupies residues 130–150 (LGLFFNCTFLLFGSVIQLIAC). The Extracellular portion of the chain corresponds to 151 to 165 (ASNIYYINDHLDKRT). A helical transmembrane segment spans residues 166–186 (WTYIFGACCATTVFIPSFHNY). Residues 187–189 (RIW) lie on the Cytoplasmic side of the membrane. A helical membrane pass occupies residues 190-210 (SFLGLVMTTYTAWYMTIASIL). Topologically, residues 211-225 (HGQAEDVKHSGPTKL) are extracellular. Residues 226–246 (VLYFTGATNILYTFGGHAVTV) traverse the membrane as a helical segment. Residues 247-259 (EIMHAMWKPQKFK) are Cytoplasmic-facing. A helical membrane pass occupies residues 260 to 280 (MIYLIATLYVMTLTLPSAAAV). The Extracellular portion of the chain corresponds to 281-307 (YWAFGDNLLTHSNALSLLPRTGFRDTA). The chain crosses the membrane as a helical span at residues 308–328 (VILMLIHQFITFGFACTPLYF). The Cytoplasmic portion of the chain corresponds to 329–349 (VWEKFLGVHETKSLLKRALVR). Residues 350-370 (LPVVIPIWFLAIIFPFFGPIN) traverse the membrane as a helical segment. Residues 371–374 (STVG) are Extracellular-facing. Residues 375–395 (SLLVSFTVYIIPALAHMVTFA) form a helical membrane-spanning segment. The Cytoplasmic portion of the chain corresponds to 396–421 (SAPARENAVERPPSFLGGWVGLYSVN). The helical transmembrane segment at 422–442 (VFVAVWVLVVGFGLGGWASML) threads the bilayer. The Extracellular portion of the chain corresponds to 443–465 (NFVHQIKTFGLFAKCFQCPPHKA).

It belongs to the amino acid/polyamine transporter 2 family. Amino acid/auxin permease (AAAP) (TC 2.A.18.1) subfamily. Shoots and roots of nodulating plants. Low levels in roots, nodules, stems, petioles, leaves, shoot apices and flowers.

It localises to the cell membrane. Functionally, carrier protein involved in proton-driven auxin influx. Mediates the formation of auxin gradient from developing leaves (site of auxin biosynthesis) to tips by contributing to the loading of auxin in vascular tissues and facilitating acropetal (base to tip) auxin transport within inner tissues of the root apex, and basipetal (tip to base) auxin transport within outer tissues of the root apex. May be involved in lateral roots and nodules formation. This is Auxin transporter-like protein 3 (LAX3) from Medicago truncatula (Barrel medic).